A 68-amino-acid chain; its full sequence is Molybdenum-pterin-binding protein 1 (68 aa).

One can recognise a Mop domain in the interval 2–68; it reads SISARNQLKG…IKSTDVMILA (67 aa).

Binds one mole of molybdenum per mole of protein and contains a pterin. This is Molybdenum-pterin-binding protein 1 (mopI) from Clostridium pasteurianum.